We begin with the raw amino-acid sequence, 418 residues long: Glutamyl-tRNA reductase (418 aa).

Substrate-binding positions include 49–52, Ser105, 110–112, and Gln116; these read TCNR and EPQ. Residue Cys50 is the Nucleophile of the active site. 185–190 contacts NADP(+); it reads GAGEMI.

It belongs to the glutamyl-tRNA reductase family. As to quaternary structure, homodimer.

The enzyme catalyses (S)-4-amino-5-oxopentanoate + tRNA(Glu) + NADP(+) = L-glutamyl-tRNA(Glu) + NADPH + H(+). The protein operates within porphyrin-containing compound metabolism; protoporphyrin-IX biosynthesis; 5-aminolevulinate from L-glutamyl-tRNA(Glu): step 1/2. In terms of biological role, catalyzes the NADPH-dependent reduction of glutamyl-tRNA(Glu) to glutamate 1-semialdehyde (GSA). This chain is Glutamyl-tRNA reductase, found in Aromatoleum aromaticum (strain DSM 19018 / LMG 30748 / EbN1) (Azoarcus sp. (strain EbN1)).